The following is a 339-amino-acid chain: DNA-directed RNA polymerase subunit alpha (339 aa).

The alpha N-terminal domain (alpha-NTD) stretch occupies residues Met1–Glu233. The tract at residues Lys264 to Phe339 is alpha C-terminal domain (alpha-CTD).

The protein belongs to the RNA polymerase alpha chain family. In plastids the minimal PEP RNA polymerase catalytic core is composed of four subunits: alpha, beta, beta', and beta''. When a (nuclear-encoded) sigma factor is associated with the core the holoenzyme is formed, which can initiate transcription.

It localises to the plastid. It is found in the chloroplast. The enzyme catalyses RNA(n) + a ribonucleoside 5'-triphosphate = RNA(n+1) + diphosphate. DNA-dependent RNA polymerase catalyzes the transcription of DNA into RNA using the four ribonucleoside triphosphates as substrates. The chain is DNA-directed RNA polymerase subunit alpha from Festucopsis festucoides.